The following is a 502-amino-acid chain: Lanosterol 14-alpha demethylase (502 aa).

A helical transmembrane segment spans residues 22–42 (GNLASMLLIACAFTLSLVYLF). C448 lines the heme pocket.

This sequence belongs to the cytochrome P450 family. Heme serves as cofactor. In terms of processing, ubiquitinated by MARCHF6, leading to proteasomal degradation.

It is found in the endoplasmic reticulum membrane. It localises to the microsome membrane. It catalyses the reaction a 14alpha-methyl steroid + 3 reduced [NADPH--hemoprotein reductase] + 3 O2 = a Delta(14) steroid + formate + 3 oxidized [NADPH--hemoprotein reductase] + 4 H2O + 4 H(+). The catalysed reaction is lanosterol + 3 reduced [NADPH--hemoprotein reductase] + 3 O2 = 4,4-dimethyl-5alpha-cholesta-8,14,24-trien-3beta-ol + formate + 3 oxidized [NADPH--hemoprotein reductase] + 4 H2O + 4 H(+). It carries out the reaction 24,25-dihydrolanosterol + 3 reduced [NADPH--hemoprotein reductase] + 3 O2 = 4,4-dimethyl-8,14-cholestadien-3beta-ol + formate + 3 oxidized [NADPH--hemoprotein reductase] + 4 H2O + 4 H(+). The enzyme catalyses a 14alpha-methyl steroid + reduced [NADPH--hemoprotein reductase] + O2 = a 14alpha-hydroxymethyl steroid + oxidized [NADPH--hemoprotein reductase] + H2O + H(+). It catalyses the reaction a 14alpha-hydroxymethyl steroid + reduced [NADPH--hemoprotein reductase] + O2 = a 14alpha-formyl steroid + oxidized [NADPH--hemoprotein reductase] + 2 H2O + H(+). The catalysed reaction is a 14alpha-formyl steroid + reduced [NADPH--hemoprotein reductase] + O2 = a Delta(14) steroid + formate + oxidized [NADPH--hemoprotein reductase] + H2O + 2 H(+). It carries out the reaction lanosterol + reduced [NADPH--hemoprotein reductase] + O2 = 32-hydroxylanosterol + oxidized [NADPH--hemoprotein reductase] + H2O + H(+). The enzyme catalyses 32-hydroxylanosterol + reduced [NADPH--hemoprotein reductase] + O2 = 32-oxolanosterol + oxidized [NADPH--hemoprotein reductase] + 2 H2O + H(+). It catalyses the reaction 32-oxolanosterol + reduced [NADPH--hemoprotein reductase] + O2 = 4,4-dimethyl-5alpha-cholesta-8,14,24-trien-3beta-ol + formate + oxidized [NADPH--hemoprotein reductase] + H2O + 2 H(+). The catalysed reaction is 24,25-dihydrolanosterol + reduced [NADPH--hemoprotein reductase] + O2 = 32-hydroxy-24,25-dihydrolanosterol + oxidized [NADPH--hemoprotein reductase] + H2O + H(+). It carries out the reaction 32-hydroxy-24,25-dihydrolanosterol + reduced [NADPH--hemoprotein reductase] + O2 = 32-oxo-24,25-dihydrolanosterol + oxidized [NADPH--hemoprotein reductase] + 2 H2O + H(+). The enzyme catalyses 32-oxo-24,25-dihydrolanosterol + reduced [NADPH--hemoprotein reductase] + O2 = 4,4-dimethyl-8,14-cholestadien-3beta-ol + formate + oxidized [NADPH--hemoprotein reductase] + H2O + 2 H(+). The protein operates within steroid biosynthesis; zymosterol biosynthesis; zymosterol from lanosterol: step 1/6. Its activity is regulated as follows. Inhibited by azalanstat. Inhibited by azole antifungal agents ketoconazole, itraconazole and fluconazole. Functionally, sterol 14alpha-demethylase that plays a critical role in the cholesterol biosynthesis pathway, being cholesterol the major sterol component in mammalian membranes as well as a precursor for bile acid and steroid hormone synthesis. Cytochrome P450 monooxygenase that catalyzes the three-step oxidative removal of the 14alpha-methyl group (C-32) of sterols such as lanosterol (lanosta-8,24-dien-3beta-ol) and 24,25-dihydrolanosterol (DHL) in the form of formate, and converts the sterols to 4,4-dimethyl-5alpha-cholesta-8,14,24-trien-3beta-ol and 4,4-dimethyl-8,14-cholestadien-3beta-ol, respectively, which are intermediates of cholesterol biosynthesis. Can also demethylate substrates not intrinsic to mammals, such as eburicol (24-methylene-24,25-dihydrolanosterol), but at a lower rate than DHL. The protein is Lanosterol 14-alpha demethylase of Bos taurus (Bovine).